We begin with the raw amino-acid sequence, 594 residues long: DEAD-box ATP-dependent RNA helicase 25 (594 aa).

Disordered regions lie at residues 56–80 (RSGG…EEGL) and 92–121 (GVRE…VDGS). Positions 126–154 (TRFDQCTISPLSLKAVKDAGYERMTQVQE) match the Q motif motif. Residues 157 to 340 (LPVILQGKDV…HIAMKKNYKF (184 aa)) enclose the Helicase ATP-binding domain. 170 to 177 (AKTGTGKT) is an ATP binding site. The DEAD box motif lies at 288-291 (DEAD). The region spanning 370–520 (ILYDVLKKHV…SVDSSTQTIV (151 aa)) is the Helicase C-terminal domain.

The protein belongs to the DEAD box helicase family.

It catalyses the reaction ATP + H2O = ADP + phosphate + H(+). In Oryza sativa subsp. japonica (Rice), this protein is DEAD-box ATP-dependent RNA helicase 25.